The primary structure comprises 333 residues: Foldase protein PrsA (333 aa).

The signal sequence occupies residues 1–22 (MKKSTKLLAGIVTLASAMTLAA). Cysteine 23 is lipidated: N-palmitoyl cysteine. Cysteine 23 carries S-diacylglycerol cysteine lipidation. The region spanning 145-240 (TPEMTTQVIT…NKFYIVKVTK (96 aa)) is the PpiC domain. Residues 301-333 (DKKASKANTSKSDQKTSSDSSKDSQSSKSKSEK) are disordered. Positions 312-322 (SDQKTSSDSSK) are enriched in basic and acidic residues. A compositionally biased stretch (low complexity) spans 323–333 (DSQSSKSKSEK).

It belongs to the PrsA family.

It is found in the cell membrane. It carries out the reaction [protein]-peptidylproline (omega=180) = [protein]-peptidylproline (omega=0). In terms of biological role, plays a major role in protein secretion by helping the post-translocational extracellular folding of several secreted proteins. The protein is Foldase protein PrsA of Streptococcus equi subsp. zooepidemicus (strain MGCS10565).